A 177-amino-acid chain; its full sequence is MRLLPLVAAATAAFLVVACSSPTPPRGVTVVNNFDAKRYLGTWYEIARFDHRFERGLEKVTATYSLRDDGGLNVINKGYNPDRGMWQQSEGKAYFTGAPTRAALKVSFFGPFYGGYNVIALDREYRHALVCGPDRDYLWILSRTPTISDEVKQEMLAVATREGFDVSKFIWVQQPGS.

Positions 1–18 are cleaved as a signal peptide; sequence MRLLPLVAAATAAFLVVA. Residue Cys19 is the site of N-palmitoyl cysteine attachment. Residue Cys19 is the site of S-diacylglycerol cysteine attachment.

Belongs to the calycin superfamily. Lipocalin family. In terms of assembly, homodimer.

The protein localises to the cell outer membrane. Its function is as follows. Involved in the storage or transport of lipids necessary for membrane maintenance under stressful conditions. Displays a binding preference for lysophospholipids. The chain is Outer membrane lipoprotein Blc (blc) from Escherichia coli O157:H7.